The primary structure comprises 74 residues: Cytochrome c oxidase subunit 2 (74 aa).

Topologically, residues 1–14 (MAHPSQLGLQDAAS) are mitochondrial intermembrane. The chain crosses the membrane as a helical span at residues 15–45 (PVMEELLHFHDHALMIVFLISTLVLYIIVAM). The Mitochondrial matrix portion of the chain corresponds to 46–74 (VSTKLTDKYTIDSQEIEIVWTVLPAVILI).

Belongs to the cytochrome c oxidase subunit 2 family. As to quaternary structure, component of the cytochrome c oxidase (complex IV, CIV), a multisubunit enzyme composed of 14 subunits. The complex is composed of a catalytic core of 3 subunits MT-CO1, MT-CO2 and MT-CO3, encoded in the mitochondrial DNA, and 11 supernumerary subunits COX4I, COX5A, COX5B, COX6A, COX6B, COX6C, COX7A, COX7B, COX7C, COX8 and NDUFA4, which are encoded in the nuclear genome. The complex exists as a monomer or a dimer and forms supercomplexes (SCs) in the inner mitochondrial membrane with NADH-ubiquinone oxidoreductase (complex I, CI) and ubiquinol-cytochrome c oxidoreductase (cytochrome b-c1 complex, complex III, CIII), resulting in different assemblies (supercomplex SCI(1)III(2)IV(1) and megacomplex MCI(2)III(2)IV(2)). Found in a complex with TMEM177, COA6, COX18, COX20, SCO1 and SCO2. Interacts with TMEM177 in a COX20-dependent manner. Interacts with COX20. Interacts with COX16. Cu cation is required as a cofactor.

It localises to the mitochondrion inner membrane. The catalysed reaction is 4 Fe(II)-[cytochrome c] + O2 + 8 H(+)(in) = 4 Fe(III)-[cytochrome c] + 2 H2O + 4 H(+)(out). Functionally, component of the cytochrome c oxidase, the last enzyme in the mitochondrial electron transport chain which drives oxidative phosphorylation. The respiratory chain contains 3 multisubunit complexes succinate dehydrogenase (complex II, CII), ubiquinol-cytochrome c oxidoreductase (cytochrome b-c1 complex, complex III, CIII) and cytochrome c oxidase (complex IV, CIV), that cooperate to transfer electrons derived from NADH and succinate to molecular oxygen, creating an electrochemical gradient over the inner membrane that drives transmembrane transport and the ATP synthase. Cytochrome c oxidase is the component of the respiratory chain that catalyzes the reduction of oxygen to water. Electrons originating from reduced cytochrome c in the intermembrane space (IMS) are transferred via the dinuclear copper A center (CU(A)) of subunit 2 and heme A of subunit 1 to the active site in subunit 1, a binuclear center (BNC) formed by heme A3 and copper B (CU(B)). The BNC reduces molecular oxygen to 2 water molecules using 4 electrons from cytochrome c in the IMS and 4 protons from the mitochondrial matrix. The polypeptide is Cytochrome c oxidase subunit 2 (mt-co2) (Megalops atlanticus (Tarpon)).